The chain runs to 428 residues: MTNRTSYFYDPDVGNFHYGAGHPMKPHRLSLTHSLVLHYGLYKKMMVFKPYKASQHDMCRFHSEDYIDFLQKVSPNNMQGFTKSLNTFNVGDDCPVFPGLFEFCSRYTGASLQGATQLNHKICDIAINWAGGLHHAKKFEASGFCYVNDIVISILELLKYHPRVLYIDIDIHHGDGVQEAFYLTDRVMTVSFHKYGNYFFPGTGDMYEVGAESGRYYCLNVPLRDGIDDQSYRQLFQPVIKQVVDFYQPTCIVLQCGADSLGCDRLGCFNLSIRGHGECVEFVKSFKIPLLVLGGGGYTVRNVARCWTFETSLLLEESISDELPYSEYFEYFAPDFTLHPDVSTRIENQNSRQYLEQIRQTVFENLKMLNHAPSVQIHDVPSDMLNYERNDEPDPDERGAEENYTRPEAANEFYDGDHDNDKESDVEI.

The segment at 3-316 (NRTSYFYDPD…WTFETSLLLE (314 aa)) is histone deacetylase. Residues histidine 17, glycine 21, and lysine 25 each coordinate 1D-myo-inositol 1,4,5,6-tetrakisphosphate. Residue histidine 135 is part of the active site. 3 residues coordinate Zn(2+): aspartate 170, histidine 172, and aspartate 259. Arginine 265 serves as a coordination point for 1D-myo-inositol 1,4,5,6-tetrakisphosphate. The tract at residues 385–428 (LNYERNDEPDPDERGAEENYTRPEAANEFYDGDHDNDKESDVEI) is disordered. Basic and acidic residues-rich tracts occupy residues 386–405 (NYER…ENYT) and 415–428 (DGDH…DVEI).

Belongs to the histone deacetylase family. HD type 1 subfamily.

The protein resides in the nucleus. Its subcellular location is the chromosome. It localises to the cytoplasm. The protein localises to the cytosol. It carries out the reaction N(6)-acetyl-L-lysyl-[histone] + H2O = L-lysyl-[histone] + acetate. Its activity is regulated as follows. Inositol tetraphosphate (1D-myo-inositol 1,4,5,6-tetrakisphosphate) promotes the histone deacetylase activity by acting as an intermolecular glue between hdac3 and N-Cor repressor complex components. Responsible for the deacetylation of lysine residues on the N-terminal part of the core histones (H2A, H2B, H3 and H4). Histone deacetylation gives a tag for epigenetic repression and plays an important role in transcriptional regulation, cell cycle progression and developmental events. Histone deacetylases act via the formation of large multiprotein complexes, such as N-Cor repressor complex, which activate the histone deacetylase activity. May play a role in the regulation of the circadian clock in a deacetylase activity-independent manner. The protein is Histone deacetylase 3 (hdac3) of Tetraodon nigroviridis (Spotted green pufferfish).